We begin with the raw amino-acid sequence, 450 residues long: 3-keto-steroid reductase erg27 (450 aa).

Residues Leu25, Thr53, and Lys59 each contribute to the NADP(+) site. Residues Ser215 and Tyr238 each act as proton donor in the active site. The NADP(+) site is built by Tyr238, Lys242, and Thr296. The active-site Lowers pKa of active site Tyr is Lys242.

It belongs to the short-chain dehydrogenases/reductases (SDR) family. ERG27 subfamily. As to quaternary structure, heterotetramer of erg25, erg26, erg27 and erg28. Erg28 acts as a scaffold to tether erg27 and other 4,4-demethylation-related enzymes, forming a demethylation enzyme complex, in the endoplasmic reticulum.

The protein localises to the endoplasmic reticulum membrane. It localises to the lipid droplet. Its pathway is steroid metabolism; ergosterol biosynthesis. Sterol-C4-methyl oxidase; part of the third module of ergosterol biosynthesis pathway that includes the late steps of the pathway. Erg27 is a catalytic component of the C-4 demethylation complex that catalyzes the conversion of 4,4-dimethylfecosterol into fecosterol via 4-methylfecosterol. The third module or late pathway involves the ergosterol synthesis itself through consecutive reactions that mainly occur in the endoplasmic reticulum (ER) membrane. Firstly, the squalene synthase erg9 catalyzes the condensation of 2 farnesyl pyrophosphate moieties to form squalene, which is the precursor of all steroids. Squalene synthase is crucial for balancing the incorporation of farnesyl diphosphate (FPP) into sterol and nonsterol isoprene synthesis. Secondly, squalene is converted into lanosterol by the consecutive action of the squalene epoxidase erg1 and the lanosterol synthase erg7. Then, the delta(24)-sterol C-methyltransferase erg6 methylates lanosterol at C-24 to produce eburicol. Eburicol is the substrate of the sterol 14-alpha demethylase encoded by cyp51A and cyp51B, to yield 4,4,24-trimethyl ergosta-8,14,24(28)-trienol. The C-14 reductase erg24 then reduces the C14=C15 double bond which leads to 4,4-dimethylfecosterol. A sequence of further demethylations at C-4, involving the C-4 demethylation complex containing the C-4 methylsterol oxidases erg25A or erg25B, the sterol-4-alpha-carboxylate 3-dehydrogenase erg26 and the 3-keto-steroid reductase erg27, leads to the production of fecosterol via 4-methylfecosterol. The C-8 sterol isomerase erg2 then catalyzes the reaction which results in unsaturation at C-7 in the B ring of sterols and thus converts fecosterol to episterol. The sterol-C5-desaturase erg3B then catalyzes the introduction of a C-5 double bond in the B ring to produce 5-dehydroepisterol. The 2 other sterol-C5-desaturases, erg3A and erg3C, seem to be less important in ergosterol biosynthesis. The C-22 sterol desaturase erg5 further converts 5-dehydroepisterol into ergosta-5,7,22,24(28)-tetraen-3beta-ol by forming the C-22(23) double bond in the sterol side chain. Finally, ergosta-5,7,22,24(28)-tetraen-3beta-ol is substrate of the C-24(28) sterol reductases erg4A and erg4B to produce ergosterol. Possible alternative sterol biosynthetic pathways might exist from fecosterol to ergosterol, depending on the activities of the erg3 isoforms. In Aspergillus fumigatus (strain ATCC MYA-4609 / CBS 101355 / FGSC A1100 / Af293) (Neosartorya fumigata), this protein is 3-keto-steroid reductase erg27.